The following is a 384-amino-acid chain: Chaperone protein DnaJ (384 aa).

The J domain maps to 4 to 68 (DFYDVLGVSR…EKRQMYDQLG (65 aa)). Disordered regions lie at residues 74 to 105 (QAQK…GMGG) and 113 to 132 (NNLF…QGRD). The span at 79 to 105 (GAGGGGGGRGQGNPFGGGGNPFGGMGG) shows a compositional bias: gly residues. The CR-type zinc-finger motif lies at 147–229 (GVERDVTIRR…CRGSGRVRRT (83 aa)). Zn(2+) is bound by residues Cys160, Cys163, Cys177, Cys180, Cys203, Cys206, Cys217, and Cys220. CXXCXGXG motif repeat units lie at residues 160–167 (CPECDGEG), 177–184 (CSECNGSG), 203–210 (CRACGGEG), and 217–224 (CSECRGSG).

It belongs to the DnaJ family. As to quaternary structure, homodimer. Requires Zn(2+) as cofactor.

The protein resides in the cytoplasm. Functionally, participates actively in the response to hyperosmotic and heat shock by preventing the aggregation of stress-denatured proteins and by disaggregating proteins, also in an autonomous, DnaK-independent fashion. Unfolded proteins bind initially to DnaJ; upon interaction with the DnaJ-bound protein, DnaK hydrolyzes its bound ATP, resulting in the formation of a stable complex. GrpE releases ADP from DnaK; ATP binding to DnaK triggers the release of the substrate protein, thus completing the reaction cycle. Several rounds of ATP-dependent interactions between DnaJ, DnaK and GrpE are required for fully efficient folding. Also involved, together with DnaK and GrpE, in the DNA replication of plasmids through activation of initiation proteins. In Haloferax mediterranei (strain ATCC 33500 / DSM 1411 / JCM 8866 / NBRC 14739 / NCIMB 2177 / R-4) (Halobacterium mediterranei), this protein is Chaperone protein DnaJ.